Reading from the N-terminus, the 160-residue chain is Anaerobic nitrite reductase HBII (160 aa).

Residues 8 to 157 enclose the Globin domain; the sequence is GFTEEQEALV…LVAAIKLEMK (150 aa). The Homodimerization signature appears at 41-45; the sequence is EIAPS. Heme b is bound by residues S51, K65, H69, K99, S103, and H104. The Homodimerization signature appears at 111-123; it reads DEHFEVTKFALLE.

Belongs to the plant globin family. Homodimer. It depends on heme b as a cofactor.

It localises to the cytoplasm. The protein localises to the nucleus. The catalysed reaction is Fe(III)-heme b-[protein] + nitric oxide + H2O = Fe(II)-heme b-[protein] + nitrite + 2 H(+). Phytoglobin that reduces nitrite to nitric oxide (NO) under anoxic conditions (e.g. during flooding or in waterlogged soil) and upon root nodulation. Required for general plant development and during nodulation, especially for the onset of symbiosis. Monitors nitric oxide (NO) levels during early phase of the nitrogen-fixing symbiosis and buffers oxygen in functioning nodules. May not function as an oxygen storage or transport protein. Has an unusually high affinity for O(2) through a hexacoordinate heme iron because of a very low dissociation constant. This chain is Anaerobic nitrite reductase HBII, found in Casuarina glauca (Swamp oak).